Reading from the N-terminus, the 206-residue chain is Large ribosomal subunit protein uL4 (206 aa).

Residues 51 to 96 form a disordered region; the sequence is LTRAEVKHSTKKPFRQKGTGNARAGMTSTPNRRGGGRAFPNKPDEN.

This sequence belongs to the universal ribosomal protein uL4 family. In terms of assembly, part of the 50S ribosomal subunit.

Functionally, one of the primary rRNA binding proteins, this protein initially binds near the 5'-end of the 23S rRNA. It is important during the early stages of 50S assembly. It makes multiple contacts with different domains of the 23S rRNA in the assembled 50S subunit and ribosome. Its function is as follows. Forms part of the polypeptide exit tunnel. This chain is Large ribosomal subunit protein uL4, found in Chromobacterium violaceum (strain ATCC 12472 / DSM 30191 / JCM 1249 / CCUG 213 / NBRC 12614 / NCIMB 9131 / NCTC 9757 / MK).